A 284-amino-acid chain; its full sequence is Para-Rep C3 (284 aa).

In terms of domain architecture, CRESS-DNA virus Rep endonuclease spans 3–98 (TVQSTCWVFT…IEGPWEYGKY (96 aa)). The short motif at 10 to 13 (VFTL) is the RCR-1 element. Residues E36 and H42 each coordinate a divalent metal cation. The RCR-2 motif lies at 42-44 (HLQ). The Nuclear localization signal motif lies at 51 to 71 (AQQSLGQMKAIIPGAHFEKMR). The For DNA cleavage activity role is filled by Y81. The RCR-3 motif lies at 81–84 (YAMK). Residue D86 participates in a divalent metal cation binding. Positions 98–104 (YIKKGSH) match the Nuclear localization signal motif. Residue 174-182 (GPKGGEGKS) participates in ATP binding.

The protein belongs to the nanoviridea/circoviridae replication-associated protein family. Homooligomer (Potential). Rep binds to repeated DNA motifs (iterons). Mg(2+) serves as cofactor. It depends on Mn(2+) as a cofactor.

It localises to the host nucleus. The catalysed reaction is ATP + H2O = ADP + phosphate + H(+). In terms of biological role, initiates and terminates the replication only of its own subviral DNA molecule. The closed circular ssDNA genome is first converted to a superhelical dsDNA. Rep binds a specific hairpin at the genome origin of replication. Introduces an endonucleolytic nick within the intergenic region of the genome, thereby initiating the rolling circle replication (RCR). Following cleavage, binds covalently to the 5'-phosphate of DNA as a tyrosyl ester. The cleavage gives rise to a free 3'-OH that serves as a primer for the cellular DNA polymerase. The polymerase synthesizes the (+) strand DNA by rolling circle mechanism. After one round of replication, a Rep-catalyzed nucleotidyl transfer reaction releases a circular single-stranded virus genome, thereby terminating the replication. Displays origin-specific DNA cleavage, nucleotidyl transferase, ATPase and helicase activities. The protein is Para-Rep C3 (C3) of Milk vetch dwarf C3 alphasatellite (MVDC3A).